The sequence spans 308 residues: Ribosomal RNA small subunit methyltransferase H (308 aa).

S-adenosyl-L-methionine contacts are provided by residues 35–37, aspartate 54, phenylalanine 80, aspartate 101, and glutamine 108; that span reads GGH.

This sequence belongs to the methyltransferase superfamily. RsmH family.

It localises to the cytoplasm. The enzyme catalyses cytidine(1402) in 16S rRNA + S-adenosyl-L-methionine = N(4)-methylcytidine(1402) in 16S rRNA + S-adenosyl-L-homocysteine + H(+). Its function is as follows. Specifically methylates the N4 position of cytidine in position 1402 (C1402) of 16S rRNA. In Mycoplasma pneumoniae (strain ATCC 29342 / M129 / Subtype 1) (Mycoplasmoides pneumoniae), this protein is Ribosomal RNA small subunit methyltransferase H.